The following is a 251-amino-acid chain: Transcription initiation factor TFIID subunit 9B (251 aa).

Methionine 1 bears the N-acetylmethionine mark. A Phosphoserine modification is found at serine 147. Phosphothreonine is present on residues threonine 159 and threonine 174. Serine 177 carries the phosphoserine modification. The disordered stretch occupies residues 229-251; that stretch reads QNTANEANPLKRKHEDDDDNDIM.

The protein belongs to the TAF9 family. In terms of assembly, binds TAF5 and TAF6. Component of TFIID and the TATA-binding protein-free TAF complex (TFTC). TFIID is composed of TATA binding protein (TBP) and a number of TBP-associated factors (TAFs). Binds N-terminal domain of p53/TP53 which is essential for transcription.

Its subcellular location is the nucleus. In terms of biological role, essential for cell viability. TAF9 and TAF9B are involved in transcriptional activation as well as repression of distinct but overlapping sets of genes. May have a role in gene regulation associated with apoptosis. TAFs are components of the transcription factor IID (TFIID) complex, the TBP-free TAFII complex (TFTC), the PCAF histone acetylase complex and the STAGA transcription coactivator-HAT complex. TFIID or TFTC are essential for the regulation of RNA polymerase II-mediated transcription. The sequence is that of Transcription initiation factor TFIID subunit 9B (TAF9B) from Homo sapiens (Human).